Reading from the N-terminus, the 574-residue chain is Serine carboxypeptidase ctsa-3.1 (574 aa).

An N-terminal signal peptide occupies residues 1–19; sequence MCRTLLGVAFLVVTVLSQG. Residues asparagine 48 and asparagine 163 are each glycosylated (N-linked (GlcNAc...) asparagine). Residue serine 172 is part of the active site. Residues asparagine 241, asparagine 408, asparagine 414, and asparagine 426 are each glycosylated (N-linked (GlcNAc...) asparagine). Residues aspartate 441 and histidine 507 contribute to the active site. The N-linked (GlcNAc...) asparagine glycan is linked to asparagine 534.

Belongs to the peptidase S10 family.

The protein is Serine carboxypeptidase ctsa-3.1 of Caenorhabditis elegans.